The following is an 853-amino-acid chain: Transcription factor CPH2 (853 aa).

Disordered stretches follow at residues 165 to 209 (EPPI…DKNS) and 296 to 353 (NMNP…VHHP). The span at 180–194 (TTTVSSTNSITNTTK) shows a compositional bias: low complexity. Residues 205–274 (KDKNSHNMIE…TKATEYIKHL (70 aa)) enclose the bHLH domain. Pro residues predominate over residues 301–315 (SLPPPPQQMQAPPQP). Positions 330 to 352 (TPASQYPSPQQQVSPTQQQTVHH) are enriched in low complexity.

It is found in the nucleus. Transcription factor that positively controls filamentous growth, virulence, and invasiveness. Binds directly to the two SRE-1-like elements upstream of TEC1 and thus positively regulates expression of this important hyphal growth regulator. Functions independently of known signaling cascades involving EFG1. Also regulates gene expression during intestinal colonization but is not involved in host cell adhesion. In Candida albicans (strain SC5314 / ATCC MYA-2876) (Yeast), this protein is Transcription factor CPH2 (CPH2).